Reading from the N-terminus, the 430-residue chain is Carbamoyl phosphate synthase arginine-specific small chain (430 aa).

The transit peptide at 1-9 (MLSATKRYL) directs the protein to the mitochondrion. Positions 219-407 (HIAVLDCGAK…FDNINVYKKS (189 aa)) constitute a Glutamine amidotransferase type-1 domain. The Nucleophile role is filled by Cys296. Catalysis depends on residues His380 and Glu382.

This sequence belongs to the CarA family. In terms of assembly, heterodimer composed of 2 chains; the small (or glutamine) chain promotes the hydrolysis of glutamine to ammonia, which is used by the large (or ammonia) chain to synthesize carbamoyl phosphate.

Its subcellular location is the mitochondrion matrix. The enzyme catalyses hydrogencarbonate + L-glutamine + 2 ATP + H2O = carbamoyl phosphate + L-glutamate + 2 ADP + phosphate + 2 H(+). It catalyses the reaction L-glutamine + H2O = L-glutamate + NH4(+). The protein operates within amino-acid biosynthesis; L-arginine biosynthesis; carbamoyl phosphate from bicarbonate: step 1/1. Functionally, small subunit of the arginine-specific carbamoyl phosphate synthase (CPSase). CPSase catalyzes the formation of carbamoyl phosphate from the ammonia moiety of glutamine, carbonate, and phosphate donated by ATP, the first step of the arginine biosynthetic pathway. The small subunit (glutamine amidotransferase) binds and cleaves glutamine to supply the large subunit with the substrate ammonia. The sequence is that of Carbamoyl phosphate synthase arginine-specific small chain (CPA1) from Candida albicans (strain SC5314 / ATCC MYA-2876) (Yeast).